Here is a 178-residue protein sequence, read N- to C-terminus: Peptide deformylase 2 (178 aa).

The Fe cation site is built by Cys101 and His143. Glu144 is a catalytic residue. Fe cation is bound at residue His147.

It belongs to the polypeptide deformylase family. Fe(2+) is required as a cofactor.

The enzyme catalyses N-terminal N-formyl-L-methionyl-[peptide] + H2O = N-terminal L-methionyl-[peptide] + formate. Functionally, removes the formyl group from the N-terminal Met of newly synthesized proteins. Requires at least a dipeptide for an efficient rate of reaction. N-terminal L-methionine is a prerequisite for activity but the enzyme has broad specificity at other positions. The sequence is that of Peptide deformylase 2 from Pseudomonas putida (strain ATCC 47054 / DSM 6125 / CFBP 8728 / NCIMB 11950 / KT2440).